A 397-amino-acid chain; its full sequence is Transcription factor TGAL6 (397 aa).

The 45-residue stretch at 104 to 148 folds into the bZIP domain; it reads PDKVLRRLAQNREAARKSRLRKKAYIQQLETSRLKLAQLEQELQR. The interval 106–126 is basic motif; that stretch reads KVLRRLAQNREAARKSRLRKK. The segment at 132-146 is leucine-zipper; it reads LETSRLKLAQLEQEL. Residues 175–390 enclose the DOG1 domain; sequence ALGFEIKYSH…RALSSLWAAR (216 aa).

It belongs to the bZIP family.

The protein localises to the nucleus. In terms of biological role, transcriptional regulator involved in defense response. This Oryza sativa subsp. japonica (Rice) protein is Transcription factor TGAL6.